We begin with the raw amino-acid sequence, 93 residues long: uncharacterized protein (93 aa).

The 76-residue stretch at 1 to 76 (MDSHTTEKRR…IQTIEPDESM (76 aa)) folds into the Sm domain.

In terms of assembly, part of the core SMN complex at least composed of smn1, yip11/gem2, gem6, gem7 and gem8. Interacts with gem7; the interaction is direct.

Functionally, the SMN complex catalyzes the assembly of small nuclear ribonucleoproteins (snRNPs), the building blocks of the spliceosome, and thereby plays an important role in the splicing of cellular pre-mRNAs. Most spliceosomal snRNPs contain a common set of Sm proteins smb1, smd1, smd2, smd3, sme1, smf1 and smg1 that assemble in a heptameric protein ring on the Sm site of the small nuclear RNA to form the core snRNP (Sm core). In the cytosol, the Sm proteins smd1, smd2, sme1, smf1 and smg1 (5Sm) are trapped in an inactive 6S pICln-Sm complex by the chaperone saf5. To complete assembly of core snRNPs, the SMN complex accepts 5Sm from saf5. Binding of snRNA inside 5Sm triggers eviction of the SMN complex, thereby allowing binding of smd3 and smb1 to complete assembly of the core snRNP. This is an uncharacterized protein from Schizosaccharomyces pombe (strain 972 / ATCC 24843) (Fission yeast).